A 299-amino-acid chain; its full sequence is Tyrosine recombinase XerC (299 aa).

A Core-binding (CB) domain is found at 2-88; that stretch reads SALQPLIDTY…ALRSFLDYLV (87 aa). Residues 109 to 289 form the Tyr recombinase domain; the sequence is PLPKNVSVDD…DFQHLSKIYD (181 aa). Active-site residues include Arg148, Lys172, His241, Arg244, and His267. Tyr276 serves as the catalytic O-(3'-phospho-DNA)-tyrosine intermediate.

Belongs to the 'phage' integrase family. XerC subfamily. In terms of assembly, forms a cyclic heterotetrameric complex composed of two molecules of XerC and two molecules of XerD.

It localises to the cytoplasm. Functionally, site-specific tyrosine recombinase, which acts by catalyzing the cutting and rejoining of the recombining DNA molecules. The XerC-XerD complex is essential to convert dimers of the bacterial chromosome into monomers to permit their segregation at cell division. It also contributes to the segregational stability of plasmids. In Psychromonas ingrahamii (strain DSM 17664 / CCUG 51855 / 37), this protein is Tyrosine recombinase XerC.